The sequence spans 434 residues: Putative nuclease OPG089 (434 aa).

The protein belongs to the XPG/RAD2 endonuclease family. FEN1 subfamily. Requires Mg(2+) as cofactor.

It is found in the virion. Putative nuclease that seems to be required for double-strand break repair, homologous recombination, and production of full-length viral genomic DNA. The polypeptide is Putative nuclease OPG089 (OPG089) (Monkeypox virus).